The primary structure comprises 132 residues: Prefoldin subunit alpha (132 aa).

The protein belongs to the prefoldin subunit alpha family. Heterohexamer of two alpha and four beta subunits.

The protein resides in the cytoplasm. Its function is as follows. Molecular chaperone capable of stabilizing a range of proteins. Seems to fulfill an ATP-independent, HSP70-like function in archaeal de novo protein folding. The protein is Prefoldin subunit alpha (pfdA) of Pyrobaculum aerophilum (strain ATCC 51768 / DSM 7523 / JCM 9630 / CIP 104966 / NBRC 100827 / IM2).